The chain runs to 747 residues: Transcription factor phm2 (747 aa).

Residues 21 to 50 (CNACRKRKRVRCDRLHPCSNCASRGLGSTC) constitute a DNA-binding region (zn(2)-C6 fungal-type). Disordered regions lie at residues 112–150 (GLQNQGSDARSDARCQPTPLSSETEFEYPVAPSPSDHGS) and 414–436 (TAEPRNLYDTDFDEDSSALPESR).

The protein localises to the nucleus. Transcription factor that regulates the expression of the gene cluster that mediates the biosynthesis of the trans-fused decalin-containing tetramic acid phomasetin. This chain is Transcription factor phm2, found in Pyrenochaetopsis sp.